The primary structure comprises 149 residues: Large ribosomal subunit protein bL9 (149 aa).

This sequence belongs to the bacterial ribosomal protein bL9 family.

Binds to the 23S rRNA. This chain is Large ribosomal subunit protein bL9, found in Salmonella dublin (strain CT_02021853).